A 228-amino-acid chain; its full sequence is 2,3-bisphosphoglycerate-dependent phosphoglycerate mutase (228 aa).

Substrate-binding positions include 8–15 (RHGQSQWN), 21–22 (TG), Arg60, 87–90 (ERHY), Lys98, 114–115 (RR), and 180–181 (GN). His9 functions as the Tele-phosphohistidine intermediate in the catalytic mechanism. Glu87 (proton donor/acceptor) is an active-site residue.

The protein belongs to the phosphoglycerate mutase family. BPG-dependent PGAM subfamily. As to quaternary structure, homodimer.

The enzyme catalyses (2R)-2-phosphoglycerate = (2R)-3-phosphoglycerate. Its pathway is carbohydrate degradation; glycolysis; pyruvate from D-glyceraldehyde 3-phosphate: step 3/5. Functionally, catalyzes the interconversion of 2-phosphoglycerate and 3-phosphoglycerate. The protein is 2,3-bisphosphoglycerate-dependent phosphoglycerate mutase of Sphingopyxis alaskensis (strain DSM 13593 / LMG 18877 / RB2256) (Sphingomonas alaskensis).